The chain runs to 226 residues: Small ribosomal subunit protein uS2c (226 aa).

Belongs to the universal ribosomal protein uS2 family.

The protein localises to the plastid. Its subcellular location is the chloroplast. The sequence is that of Small ribosomal subunit protein uS2c (rps2) from Ostreococcus tauri.